Here is a 1192-residue protein sequence, read N- to C-terminus: Reticulon-4 (1192 aa).

M1 is modified (N-acetylmethionine). The disordered stretch occupies residues M1–A204. At M1 to G1018 the chain is on the cytoplasmic side. Phosphoserine occurs at positions 7 and 15. Acidic residues predominate over residues P31 to E53. Over residues A65 to P77 the composition is skewed to low complexity. A compositionally biased stretch (pro residues) spans P87–A101. The residue at position 107 (S107) is a Phosphoserine. The span at P110–K132 shows a compositional bias: low complexity. The span at A141–S150 shows a compositional bias: pro residues. Phosphoserine is present on S152. Residues W159–P173 show a composition bias toward pro residues. Phosphoserine occurs at positions 181, 182, 184, 361, and 446. The segment at D427–S458 is disordered. Position 450 is a phosphothreonine (T450). At S511 the chain carries Phosphoserine. The segment covering A722 to L734 has biased composition (basic and acidic residues). Positions A722 to E762 are disordered. Positions V735 to I753 are enriched in acidic residues. S749 carries the post-translational modification Phosphoserine. Phosphothreonine is present on T858. S881 and S991 each carry phosphoserine. The region spanning V1005–E1192 is the Reticulon domain. The helical transmembrane segment at V1019 to V1039 threads the bilayer. Residues T1040–A1133 lie on the Lumenal side of the membrane. At K1104 the chain carries N6-acetyllysine. Residues L1134–I1154 traverse the membrane as a helical segment. Over Y1155–E1192 the chain is Cytoplasmic.

Binds to RTN4R. Interacts with ATL1. Interacts with TMEM170A. Interacts with RTN4IP1. As to quaternary structure, interacts in trans with CNTNAP1. Interacts with REEP5. Interacts with synaptic plasticity regulator PANTS; the interaction results in enhanced RTN4-mediated inhibition of AMPA receptor clustering. Interacts with GPR50. In terms of assembly, homodimer. Interacts with BAD/Bcl-xl and BCL2. Interact with RTN3. Interacts with NGBR. Interacts with SPTLC1. Interacts with GRAMD4. Interacts with CDH5. Interacts with BACE1 and BACE2. Interacts with REEP5. Interacts with RETREG3. Interacts with BACE1 and BACE2. Interacts with TMEM33. In terms of tissue distribution, isoform A: is specifically expressed in brain and testis and weakly in heart and skeletal muscle. Isoform B: widely expressed except for the liver. Highly expressed in endothelial cells and vascular smooth muscle cells, including blood vessels and mesenteric arteries. Isoform C: is expressed in brain, skeletal muscle and adipocytes. Isoform D is testis-specific.

The protein localises to the endoplasmic reticulum membrane. It is found in the cell membrane. It localises to the synapse. Its subcellular location is the cell junction. In terms of biological role, required to induce the formation and stabilization of endoplasmic reticulum (ER) tubules. They regulate membrane morphogenesis in the ER by promoting tubular ER production. They influence nuclear envelope expansion, nuclear pore complex formation and proper localization of inner nuclear membrane proteins. However each isoform have specific functions mainly depending on their tissue expression specificities. Its function is as follows. Developmental neurite growth regulatory factor with a role as a negative regulator of axon-axon adhesion and growth, and as a facilitator of neurite branching. Regulates neurite fasciculation, branching and extension in the developing nervous system. Involved in down-regulation of growth, stabilization of wiring and restriction of plasticity in the adult CNS. Regulates the radial migration of cortical neurons via an RTN4R-LINGO1 containing receptor complex. Acts as a negative regulator of central nervous system angiogenesis. Inhibits spreading, migration and sprouting of primary brain microvascular endothelial cells (MVECs). Also induces the retraction of MVECs lamellipodia and filopodia in a ROCK pathway-dependent manner. Functionally, mainly function in endothelial cells and vascular smooth muscle cells, is also involved in immune system regulation. Modulator of vascular remodeling, promotes the migration of endothelial cells but inhibits the migration of vascular smooth muscle cells. Regulates endothelial sphingolipid biosynthesis with direct effects on vascular function and blood pressure. Inhibits serine palmitoyltransferase, SPTLC1, the rate-limiting enzyme of the novo sphingolipid biosynthetic pathway, thereby controlling production of endothelial sphingosine-1-phosphate (S1P). Required to promote macrophage homing and functions such as cytokine/chemokine gene expression involved in angiogenesis, arteriogenesis and tissue repair. Mediates ICAM1 induced transendothelial migration of leukocytes such as monocytes and neutrophils and acute inflammation. Necessary for immune responses triggered by nucleic acid sensing TLRs, such as TLR9, is required for proper TLR9 location to endolysosomes. Also involved in immune response to LPS. Plays a role in liver regeneration through the modulation of hepatocytes proliferation. Reduces the anti-apoptotic activity of Bcl-xl and Bcl-2. This is likely consecutive to their change in subcellular location, from the mitochondria to the endoplasmic reticulum, after binding and sequestration. With isoform C, inhibits BACE1 activity and amyloid precursor protein processing. Regulates cardiomyocyte apoptosis upon hypoxic conditions. With isoform B, inhibits BACE1 activity and amyloid precursor protein processing. This Homo sapiens (Human) protein is Reticulon-4.